The chain runs to 333 residues: Anthranilate phosphoribosyltransferase (333 aa).

Residues glycine 81, 84 to 85, threonine 89, 91 to 94, 109 to 117, and alanine 121 each bind 5-phospho-alpha-D-ribose 1-diphosphate; these read GD, NIST, and KHGNRSVSS. Glycine 81 is an anthranilate binding site. Residue serine 93 participates in Mg(2+) binding. Position 112 (asparagine 112) interacts with anthranilate. Anthranilate is bound at residue arginine 167. Residues aspartate 225 and glutamate 226 each contribute to the Mg(2+) site.

It belongs to the anthranilate phosphoribosyltransferase family. In terms of assembly, homodimer. The cofactor is Mg(2+).

It catalyses the reaction N-(5-phospho-beta-D-ribosyl)anthranilate + diphosphate = 5-phospho-alpha-D-ribose 1-diphosphate + anthranilate. The protein operates within amino-acid biosynthesis; L-tryptophan biosynthesis; L-tryptophan from chorismate: step 2/5. Functionally, catalyzes the transfer of the phosphoribosyl group of 5-phosphorylribose-1-pyrophosphate (PRPP) to anthranilate to yield N-(5'-phosphoribosyl)-anthranilate (PRA). In Actinobacillus succinogenes (strain ATCC 55618 / DSM 22257 / CCUG 43843 / 130Z), this protein is Anthranilate phosphoribosyltransferase.